Reading from the N-terminus, the 369-residue chain is Beta-1,4-galactosyltransferase 2 (369 aa).

Topologically, residues 1 to 15 (MSRLLGGTLERVCKA) are cytoplasmic. Residues 16-36 (VLLLCLLHFLVAVILYFDVYA) form a helical; Signal-anchor for type II membrane protein membrane-spanning segment. Residues 37 to 369 (QHLAFFSRFS…GQPMSWLTQG (333 aa)) are Lumenal-facing. Over residues 58-73 (ASSSTNCSRPNATAAS) the composition is skewed to polar residues. A disordered region spans residues 58–90 (ASSSTNCSRPNATAASSGLPEVPSARPGPTAPV). Residues Asn63 and Asn68 are each glycosylated (N-linked (GlcNAc...) asparagine). The cysteines at positions 94 and 136 are disulfide-linked. UDP-alpha-D-galactose contacts are provided by residues 147–151 (PFRHR), 186–188 (FNR), 214–215 (VD), and Trp275. Cys208 and Cys227 form a disulfide bridge. Asp215 is a Mn(2+) binding site. 277–280 (GEDD) serves as a coordination point for N-acetyl-D-glucosamine. Residue His308 coordinates Mn(2+). 308–310 (HDR) lines the UDP-alpha-D-galactose pocket. N-acetyl-D-glucosamine is bound at residue Arg320. N-linked (GlcNAc...) asparagine glycosylation occurs at Asn354.

The protein belongs to the glycosyltransferase 7 family. The cofactor is Mn(2+).

Its subcellular location is the golgi apparatus. It localises to the golgi stack membrane. The enzyme catalyses D-glucose + UDP-alpha-D-galactose = lactose + UDP + H(+). It carries out the reaction an N-acetyl-beta-D-glucosaminyl derivative + UDP-alpha-D-galactose = a beta-D-galactosyl-(1-&gt;4)-N-acetyl-beta-D-glucosaminyl derivative + UDP + H(+). It catalyses the reaction N-acetyl-D-glucosamine + UDP-alpha-D-galactose = beta-D-galactosyl-(1-&gt;4)-N-acetyl-D-glucosamine + UDP + H(+). The protein operates within protein modification; protein glycosylation. Functionally, responsible for the synthesis of complex-type N-linked oligosaccharides in many glycoproteins as well as the carbohydrate moieties of glycolipids. Can produce lactose. The protein is Beta-1,4-galactosyltransferase 2 of Mus musculus (Mouse).